Here is a 425-residue protein sequence, read N- to C-terminus: Adenylosuccinate synthetase (425 aa).

Residues 12-18 and 40-42 each bind GTP; these read GDEGKGK and GHT. The active-site Proton acceptor is Asp-13. Mg(2+) is bound by residues Asp-13 and Gly-40. IMP-binding positions include 13–16, 38–41, Thr-130, Arg-144, Gln-224, Thr-239, and Arg-301; these read DEGK and NAGH. His-41 serves as the catalytic Proton donor. A substrate-binding site is contributed by 297–303; that stretch reads TVSNRRR. GTP contacts are provided by residues Arg-303, 329–331, and 411–413; these read KLD and STS.

It belongs to the adenylosuccinate synthetase family. As to quaternary structure, homodimer. Mg(2+) is required as a cofactor.

It localises to the cytoplasm. The catalysed reaction is IMP + L-aspartate + GTP = N(6)-(1,2-dicarboxyethyl)-AMP + GDP + phosphate + 2 H(+). It functions in the pathway purine metabolism; AMP biosynthesis via de novo pathway; AMP from IMP: step 1/2. Functionally, plays an important role in the de novo pathway of purine nucleotide biosynthesis. Catalyzes the first committed step in the biosynthesis of AMP from IMP. In Wolbachia pipientis wMel, this protein is Adenylosuccinate synthetase.